The primary structure comprises 280 residues: NAD-capped RNA hydrolase NudC (280 aa).

Arg-83 provides a ligand contact to substrate. Residues Cys-113, Cys-116, Cys-131, and Cys-134 each coordinate Zn(2+). Tyr-139 provides a ligand contact to substrate. The Nudix hydrolase domain occupies Pro-140–Leu-268. The a divalent metal cation site is built by Ala-177, Glu-193, and Glu-197. A Nudix box motif is present at residues Gly-178–Gly-199. Gln-211 to Ser-218 is a substrate binding site. Glu-238 lines the a divalent metal cation pocket.

Belongs to the Nudix hydrolase family. NudC subfamily. Homodimer. It depends on Mg(2+) as a cofactor. Requires Mn(2+) as cofactor. Zn(2+) is required as a cofactor.

The enzyme catalyses a 5'-end NAD(+)-phospho-ribonucleoside in mRNA + H2O = a 5'-end phospho-adenosine-phospho-ribonucleoside in mRNA + beta-nicotinamide D-ribonucleotide + 2 H(+). It catalyses the reaction NAD(+) + H2O = beta-nicotinamide D-ribonucleotide + AMP + 2 H(+). The catalysed reaction is NADH + H2O = reduced beta-nicotinamide D-ribonucleotide + AMP + 2 H(+). In terms of biological role, mRNA decapping enzyme that specifically removes the nicotinamide adenine dinucleotide (NAD) cap from a subset of mRNAs by hydrolyzing the diphosphate linkage to produce nicotinamide mononucleotide (NMN) and 5' monophosphate mRNA. The NAD-cap is present at the 5'-end of some mRNAs and stabilizes RNA against 5'-processing. Has preference for mRNAs with a 5'-end purine. Catalyzes the hydrolysis of a broad range of dinucleotide pyrophosphates. In Deinococcus radiodurans (strain ATCC 13939 / DSM 20539 / JCM 16871 / CCUG 27074 / LMG 4051 / NBRC 15346 / NCIMB 9279 / VKM B-1422 / R1), this protein is NAD-capped RNA hydrolase NudC.